A 437-amino-acid polypeptide reads, in one-letter code: Elongation factor 1-gamma (437 aa).

The residue at position 2 (A2) is an N-acetylalanine. The GST N-terminal domain occupies 2-87; sequence AAGTLYTYPE…YVSNEELRGS (86 aa). Residues 88 to 216 enclose the GST C-terminal domain; sequence TPEAAAQVVQ…VKLCEKMAQF (129 aa). K147 and K212 each carry N6-acetyllysine. The segment covering 221-254 has biased composition (basic and acidic residues); that stretch reads FAESQPKKDTPRKEKGSREEKQKPQTERKEEKKA. Residues 221–268 are disordered; that stretch reads FAESQPKKDTPRKEKGSREEKQKPQTERKEEKKAAAPAPEEEMDECEQ. K253 participates in a covalent cross-link: Glycyl lysine isopeptide (Lys-Gly) (interchain with G-Cter in SUMO1). Positions 276-437 constitute an EF-1-gamma C-terminal domain; it reads AKDPFAHLPK…KAVNQGKIFK (162 aa). Residue K285 forms a Glycyl lysine isopeptide (Lys-Gly) (interchain with G-Cter in SUMO2) linkage. K401 carries the post-translational modification N6-acetyllysine. An N6-acetyllysine; alternate modification is found at K434. An N6-malonyllysine; alternate modification is found at K434.

EF-1 is composed of four subunits: alpha, beta, delta, and gamma.

Probably plays a role in anchoring the complex to other cellular components. The polypeptide is Elongation factor 1-gamma (Eef1g) (Rattus norvegicus (Rat)).